A 309-amino-acid polypeptide reads, in one-letter code: MADERYNRKNPAVKRILQEVKEMQANPSDDFMSLPLEENIFEWQFAIRGPGDTEFEGGIYHGRIQLPADYPFKPPSFMLLTPNGRFETNTKICLSISNYHPEHWQPSWSVRTALVALIAFMPTSPNGALGSVDYPKDERRTLAIKSRETPPKYGSPERQKIIDEIHQYILSKATVVPKPLPLECSQAPSIVSEAHSQVEPQEAITVVEERSIATTDTIVDDQIIEETAEAVNTAASVVPAAAPLPAVEVVVKASVSGEQRMARRAAQKPVDDRLFTWAAVGLTIAIMVLLLKKFIKSNGYSTGFMDDQS.

A UBC core domain is found at 11-166 (PAVKRILQEV…ERQKIIDEIH (156 aa)). Cysteine 93 functions as the Glycyl thioester intermediate in the catalytic mechanism. The helical transmembrane segment at 275 to 295 (FTWAAVGLTIAIMVLLLKKFI) threads the bilayer.

This sequence belongs to the ubiquitin-conjugating enzyme family.

The protein resides in the membrane. The enzyme catalyses S-ubiquitinyl-[E1 ubiquitin-activating enzyme]-L-cysteine + [E2 ubiquitin-conjugating enzyme]-L-cysteine = [E1 ubiquitin-activating enzyme]-L-cysteine + S-ubiquitinyl-[E2 ubiquitin-conjugating enzyme]-L-cysteine.. Its pathway is protein modification; protein ubiquitination. Its function is as follows. Accepts the ubiquitin from the E1 complex and catalyzes its covalent attachment to other proteins. In Arabidopsis thaliana (Mouse-ear cress), this protein is Ubiquitin-conjugating enzyme E2 32 (UBC32).